Reading from the N-terminus, the 239-residue chain is Small ribosomal subunit protein uS3c (239 aa).

The KH type-2 domain occupies 43 to 139 (IKNYIQKNRK…RLNIGIEKVK (97 aa)).

Belongs to the universal ribosomal protein uS3 family. In terms of assembly, part of the 30S ribosomal subunit.

It localises to the plastid. It is found in the chloroplast. This chain is Small ribosomal subunit protein uS3c (rps3), found in Oryza nivara (Indian wild rice).